A 65-amino-acid chain; its full sequence is Potassium channel toxin kappa-KTx 2.7 (65 aa).

Residues M1–C26 form the signal peptide. The propeptide occupies S27–E39. Intrachain disulfides connect C45–C63 and C49–C59.

This sequence belongs to the short scorpion toxin superfamily. Potassium channel inhibitor kappa-KTx family. Kappa-KTx 2 subfamily. As to expression, expressed by the venom gland.

It localises to the secreted. Functionally, weakly inhibits the Kv7.1/KCNQ1 channel (10 uM of the toxin inhibits currents by 17.8%). The sequence is that of Potassium channel toxin kappa-KTx 2.7 from Heterometrus petersii (Asian forest scorpion).